The sequence spans 438 residues: Aspartate aminotransferase, cytoplasmic (438 aa).

L-aspartate is bound by residues glycine 73, tryptophan 167, and asparagine 220. An N6-(pyridoxal phosphate)lysine modification is found at lysine 284. Arginine 412 serves as a coordination point for L-aspartate.

It belongs to the class-I pyridoxal-phosphate-dependent aminotransferase family. Homodimer. The cofactor is pyridoxal 5'-phosphate.

Its subcellular location is the cytoplasm. It carries out the reaction L-aspartate + 2-oxoglutarate = oxaloacetate + L-glutamate. Functionally, plays a key role in amino acid metabolism. This chain is Aspartate aminotransferase, cytoplasmic (aatB), found in Dictyostelium discoideum (Social amoeba).